The chain runs to 219 residues: MKEVAPAANLVIPKLIVGLGNPEPKYDQTRHNIGFTGIDTIANIWQVSLSENRKFKGEFGEGRRPKAEKIYLLKPLTYMNRSGEAISAVVNWYKLPPSCVLIIYDDMDLPMGRLRLRLSGSAGGHNGMKSAIAHLGTQEFPRLRIGIGKPKNITAERGEAKTISHVLGKFSPKENKLMTQVLELVVDAVELSLKQGIEKAMSLYNNRTITENPVSKPPS.

A tRNA-binding site is contributed by tyrosine 26. Histidine 31 functions as the Proton acceptor in the catalytic mechanism. Residues tyrosine 78, asparagine 80, and asparagine 126 each contribute to the tRNA site.

This sequence belongs to the PTH family. As to quaternary structure, monomer.

Its subcellular location is the cytoplasm. It catalyses the reaction an N-acyl-L-alpha-aminoacyl-tRNA + H2O = an N-acyl-L-amino acid + a tRNA + H(+). In terms of biological role, hydrolyzes ribosome-free peptidyl-tRNAs (with 1 or more amino acids incorporated), which drop off the ribosome during protein synthesis, or as a result of ribosome stalling. Catalyzes the release of premature peptidyl moieties from peptidyl-tRNA molecules trapped in stalled 50S ribosomal subunits, and thus maintains levels of free tRNAs and 50S ribosomes. The polypeptide is Peptidyl-tRNA hydrolase (Trichodesmium erythraeum (strain IMS101)).